The primary structure comprises 464 residues: GTPase Der (464 aa).

EngA-type G domains follow at residues 3–166 (PVIA…PEVE) and 178–351 (IRIA…DSAF). Residues 9-16 (GRPNVGKS), 56-60 (DTGGL), 118-121 (NKTD), 184-191 (GRPNAGKS), 231-235 (DTAGV), and 296-299 (NKWD) each bind GTP. Residues 352–436 (IKVSTNHLTK…PIRLEFKTGE (85 aa)) enclose the KH-like domain.

The protein belongs to the TRAFAC class TrmE-Era-EngA-EngB-Septin-like GTPase superfamily. EngA (Der) GTPase family. In terms of assembly, associates with the 50S ribosomal subunit.

Its function is as follows. GTPase that plays an essential role in the late steps of ribosome biogenesis. This chain is GTPase Der, found in Thioalkalivibrio sulfidiphilus (strain HL-EbGR7).